The primary structure comprises 116 residues: Large ribosomal subunit protein uL18 (116 aa).

It belongs to the universal ribosomal protein uL18 family. As to quaternary structure, part of the 50S ribosomal subunit; part of the 5S rRNA/L5/L18/L25 subcomplex. Contacts the 5S and 23S rRNAs.

In terms of biological role, this is one of the proteins that bind and probably mediate the attachment of the 5S RNA into the large ribosomal subunit, where it forms part of the central protuberance. The protein is Large ribosomal subunit protein uL18 of Pseudomonas aeruginosa (strain UCBPP-PA14).